Consider the following 366-residue polypeptide: Phospho-N-acetylmuramoyl-pentapeptide-transferase (366 aa).

Helical transmembrane passes span 27–47 (GAAITSLVLCWLLGRPMISLL), 76–96 (PTMGGLLILLAVSLSCLIWVI), 101–121 (FFWLSLLSMLFMGGIGFWDDF), 136–156 (IKLLAQAIVGVVVGIVLLADP), 176–196 (IDIGWMAIPFFILVVMGSSNA), 205–225 (GLAAGCTIGVAFVYAVFSYIS), 241–261 (GAGELTIFCSALIGACMGFLW), 264–284 (CYPAAVFMGDTGSLAIGSALG), 285–305 (VVAIILGQELLLVIAGGIFVI), and 343–363 (AVTVRFWILSLLFGLLALSSL).

It belongs to the glycosyltransferase 4 family. MraY subfamily. The cofactor is Mg(2+).

Its subcellular location is the cell inner membrane. The enzyme catalyses UDP-N-acetyl-alpha-D-muramoyl-L-alanyl-gamma-D-glutamyl-meso-2,6-diaminopimeloyl-D-alanyl-D-alanine + di-trans,octa-cis-undecaprenyl phosphate = di-trans,octa-cis-undecaprenyl diphospho-N-acetyl-alpha-D-muramoyl-L-alanyl-D-glutamyl-meso-2,6-diaminopimeloyl-D-alanyl-D-alanine + UMP. Its pathway is cell wall biogenesis; peptidoglycan biosynthesis. Its function is as follows. Catalyzes the initial step of the lipid cycle reactions in the biosynthesis of the cell wall peptidoglycan: transfers peptidoglycan precursor phospho-MurNAc-pentapeptide from UDP-MurNAc-pentapeptide onto the lipid carrier undecaprenyl phosphate, yielding undecaprenyl-pyrophosphoryl-MurNAc-pentapeptide, known as lipid I. This is Phospho-N-acetylmuramoyl-pentapeptide-transferase from Methylacidiphilum infernorum (isolate V4) (Methylokorus infernorum (strain V4)).